We begin with the raw amino-acid sequence, 1638 residues long: Chromatin-remodeling ATPase INO80 (1638 aa).

A disordered region spans residues 41–93; the sequence is SLRKPLSSDEETDDEHVVKREHDVQDSDDSSTVGVVRMKQSSKRKSRLLASKE. Residues Ser-47 and Ser-48 each carry the phosphoserine modification. Thr-52 carries the post-translational modification Phosphothreonine. Residues 55 to 65 show a composition bias toward basic and acidic residues; that stretch reads EHVVKREHDVQ. Phosphoserine occurs at positions 67 and 70. Residues 136-161 adopt a coiled-coil conformation; it reads VQQLLREHVREQRQRKNYYKKAANAQ. A disordered region spans residues 201 to 259; that stretch reads RLAEAQAGPKPPKQRRRGRKKRDNMGSPESGEVPPSELGKYTFGDTLPNNEDDDEDGGE. Residues 212–222 show a composition bias toward basic residues; that stretch reads PKQRRRGRKKR. Phosphoserine occurs at positions 227 and 230. Residues 250-259 show a composition bias toward acidic residues; that stretch reads NEDDDEDGGE. The DBINO domain maps to 313–438; sequence IWQIMSKKES…AHFMSKKLGQ (126 aa). The interval 499–528 is disordered; the sequence is KEKEEEEQAQESVEDIKPEPRPEMKDLPQP. Acidic residues predominate over residues 502-511; sequence EEEEQAQESV. Residues 512–526 show a composition bias toward basic and acidic residues; it reads EDIKPEPRPEMKDLP. The 172-residue stretch at 547–718 folds into the Helicase ATP-binding domain; sequence ANIYDQGISG…WALLHFIMPT (172 aa). 560 to 567 is an ATP binding site; the sequence is DEMGLGKT. The 156-residue stretch at 1160–1315 folds into the Helicase C-terminal domain; that stretch reads VLDNLLTRLK…GGNFKPDTLK (156 aa). Disordered stretches follow at residues 1335–1364 and 1463–1638; these read QEAK…DVNM and FLDD…VGPE. The segment covering 1338–1350 has biased composition (polar residues); sequence KLQSSSPIPAATQ. Basic residues predominate over residues 1473–1495; that stretch reads MRRRHHPRGTRRGRPRGSTRRGG. Composition is skewed to low complexity over residues 1505–1534 and 1618–1627; these read TPTQ…GTSS and SPATSRAPSP.

It belongs to the SNF2/RAD54 helicase family. As to quaternary structure, component of the chromatin remodeling Ino80 complex.

It is found in the nucleus. It carries out the reaction ATP + H2O = ADP + phosphate + H(+). In terms of biological role, ATPase component of the chromatin remodeling INO80 complex which is involved in transcriptional regulation, DNA replication and DNA repair. Binds DNA. As part of the INO80 complex, remodels chromatin by shifting nucleosomes. This is Chromatin-remodeling ATPase INO80 from Drosophila melanogaster (Fruit fly).